Consider the following 260-residue polypeptide: Indole-3-glycerol phosphate synthase (260 aa).

Belongs to the TrpC family.

It catalyses the reaction 1-(2-carboxyphenylamino)-1-deoxy-D-ribulose 5-phosphate + H(+) = (1S,2R)-1-C-(indol-3-yl)glycerol 3-phosphate + CO2 + H2O. Its pathway is amino-acid biosynthesis; L-tryptophan biosynthesis; L-tryptophan from chorismate: step 4/5. This chain is Indole-3-glycerol phosphate synthase, found in Staphylococcus aureus (strain COL).